The following is a 465-amino-acid chain: UDP-N-acetylmuramate--L-alanine ligase (465 aa).

112 to 118 (GTHGKTT) contacts ATP.

The protein belongs to the MurCDEF family.

It is found in the cytoplasm. It carries out the reaction UDP-N-acetyl-alpha-D-muramate + L-alanine + ATP = UDP-N-acetyl-alpha-D-muramoyl-L-alanine + ADP + phosphate + H(+). The protein operates within cell wall biogenesis; peptidoglycan biosynthesis. Cell wall formation. This chain is UDP-N-acetylmuramate--L-alanine ligase, found in Burkholderia cenocepacia (strain HI2424).